The chain runs to 251 residues: Endonuclease NucS (251 aa).

Positions 230–240 are enriched in basic and acidic residues; that stretch reads LEPPKKGNEKR. Residues 230-251 are disordered; the sequence is LEPPKKGNEKRSKQKTLDFFTP.

Belongs to the NucS endonuclease family. In terms of assembly, homodimer. Interacts with PCNA.

The protein localises to the cytoplasm. Activity is modulated by PCNA. PCNA increases the binding affinity of NucS towards ssDNA as well as branched DNA substrates carrying either 3' or 5' flaps. PCNA is also required for optimal loading of NucS on its substrates and to direct activity towards ss/dsDNA junction. In terms of biological role, cleaves both 3' and 5' ssDNA extremities of branched DNA structures. Binds to ssDNA. This is Endonuclease NucS from Pyrococcus abyssi (strain GE5 / Orsay).